The sequence spans 226 residues: N-(5'-phosphoribosyl)anthranilate isomerase (226 aa).

The protein belongs to the TrpF family.

The catalysed reaction is N-(5-phospho-beta-D-ribosyl)anthranilate = 1-(2-carboxyphenylamino)-1-deoxy-D-ribulose 5-phosphate. It functions in the pathway amino-acid biosynthesis; L-tryptophan biosynthesis; L-tryptophan from chorismate: step 3/5. In Saccharomyces kudriavzevii (strain ATCC MYA-4449 / AS 2.2408 / CBS 8840 / NBRC 1802 / NCYC 2889) (Yeast), this protein is N-(5'-phosphoribosyl)anthranilate isomerase (TRP1).